Reading from the N-terminus, the 589-residue chain is Transcription factor atf-6 homolog (589 aa).

A compositionally biased stretch (basic and acidic residues) spans 1-16 (MNFDNTVHESNFDDLL). The tract at residues 1–82 (MNFDNTVHES…SSPPLSCANF (82 aa)) is disordered. 2 stretches are compositionally biased toward low complexity: residues 36–54 (GTDE…FSDQ) and 67–78 (GDSSSDSSPPLS). A bZIP domain is found at 250–299 (QNRKIRNRMYAQASRMRKKEADEHMKMNLQELLQENEILRTENAALKQRL). Positions 252–275 (RKIRNRMYAQASRMRKKEADEHMK) are basic motif. Residues 271–305 (DEHMKMNLQELLQENEILRTENAALKQRLAFFEHE) are a coiled coil. The tract at residues 281 to 295 (LLQENEILRTENAAL) is leucine-zipper. A helical transmembrane segment spans residues 324-344 (IIAAGSVLMMFGLFAVISPFN).

The protein belongs to the bZIP family. ATF subfamily.

Its subcellular location is the nucleus. It is found in the membrane. In terms of biological role, transcription factor. Plays a role in the unfolded protein response (UPR), perhaps mainly during constitutive endoplasmic reticulum (ER) stress, by activating transcription of genes involved in the UPR. Plays a role in modulating lifespan, acting by positively regulating expression of calcium-binding chaperone crt-1, thereby influencing ER calcium homeostasis. By activating the UPR pathway, confers adaptive protection to subsequent exposure to hypoxia. Involved in protection against proteotoxicity, probably acting via the UPR. Probably acts in the UPR in parallel with the ire-1-xbp-1 and pek-1 pathways. May be regulated by endopeptidase S2P-mediated proteolytic cleavage. The polypeptide is Transcription factor atf-6 homolog (Caenorhabditis elegans).